A 1396-amino-acid chain; its full sequence is DNA-directed RNA polymerase subunit beta' (1396 aa).

Zn(2+) is bound by residues Cys-70, Cys-72, Cys-85, and Cys-88. Asp-460, Asp-462, and Asp-464 together coordinate Mg(2+). Positions 814, 888, 895, and 898 each coordinate Zn(2+).

It belongs to the RNA polymerase beta' chain family. As to quaternary structure, the RNAP catalytic core consists of 2 alpha, 1 beta, 1 beta' and 1 omega subunit. When a sigma factor is associated with the core the holoenzyme is formed, which can initiate transcription. Mg(2+) serves as cofactor. Requires Zn(2+) as cofactor.

The catalysed reaction is RNA(n) + a ribonucleoside 5'-triphosphate = RNA(n+1) + diphosphate. Functionally, DNA-dependent RNA polymerase catalyzes the transcription of DNA into RNA using the four ribonucleoside triphosphates as substrates. The sequence is that of DNA-directed RNA polymerase subunit beta' from Chromobacterium violaceum (strain ATCC 12472 / DSM 30191 / JCM 1249 / CCUG 213 / NBRC 12614 / NCIMB 9131 / NCTC 9757 / MK).